Consider the following 141-residue polypeptide: Hemoglobin subunit alpha-2 (141 aa).

In terms of domain architecture, Globin spans 1 to 141 (VLSEGNKKII…VTYQLSSLYR (141 aa)). His59 contacts O2. His88 is a binding site for heme b.

The protein belongs to the globin family. As to quaternary structure, heterotetramer of two alpha chains and two beta chains. As to expression, red blood cells.

In terms of biological role, involved in oxygen transport from the lung to the various peripheral tissues. The chain is Hemoglobin subunit alpha-2 from Torpedo marmorata (Marbled electric ray).